We begin with the raw amino-acid sequence, 399 residues long: uncharacterized protein (399 aa).

Residues 1–8 lie on the Cytoplasmic side of the membrane; it reads MHNLQVRR. A helical membrane pass occupies residues 9–35; sequence HYAALKGFYLFAFLGTGSIIPLLSMYL. The Extracellular segment spans residues 36 to 42; sequence TKEQHLS. A helical membrane pass occupies residues 43–71; that stretch reads GSQVGLIMSLGPIVMIFFQPFWGMLSDYT. Residues 72 to 75 lie on the Cytoplasmic side of the membrane; the sequence is QKTK. A helical transmembrane segment spans residues 76–101; that stretch reads GLLAVCTSITGIIGLAYIAFDSFPLF. At 102-105 the chain is on the extracellular side; that stretch reads ILIA. A helical membrane pass occupies residues 106–123; it reads ACFAAFQSTIIPLSDSIS. Residues 124-134 lie on the Cytoplasmic side of the membrane; the sequence is LRYTQETNGNY. Residues 135–157 form a helical membrane-spanning segment; it reads GGIRLFGSLGFGVAVFAMGQVTN. Residues 158–160 lie on the Extracellular side of the membrane; it reads QLY. The chain crosses the membrane as a helical span at residues 161 to 180; the sequence is PIHVIFIFGCAFLCIAAILA. Topologically, residues 181–210 are cytoplasmic; sequence SQVPGQQKTTKVNIRKGFRELISNKTFLIF. A helical transmembrane segment spans residues 211-230; sequence MIITFTTFAPNLANNTYFSL. Residues 231 to 234 are Extracellular-facing; sequence FLDK. The helical transmembrane segment at 235–259 threads the bilayer; the sequence is SGASLSAIGILFFIGVISEIPFMRF. Residues 260–269 lie on the Cytoplasmic side of the membrane; it reads AQTFIDKMGL. Residues 270 to 289 traverse the membrane as a helical segment; that stretch reads LNVIMLSGGVSLFRWALYFT. The Extracellular portion of the chain corresponds to 290–292; the sequence is APS. The chain crosses the membrane as a helical span at residues 293–315; sequence LWIIYATVFLQGVAIGLFIPAAL. The Cytoplasmic segment spans residues 316-327; the sequence is QYVKKITPRHVE. The chain crosses the membrane as a helical span at residues 328 to 355; the sequence is ATALTMYAAIGNGFGNWFCTFAGGYIFD. The Extracellular portion of the chain corresponds to 356-358; sequence YVS. The helical transmembrane segment at 359–379 threads the bilayer; sequence IFAVYLLFGILSIAGFGLTLY. Residues 380–399 are Cytoplasmic-facing; the sequence is LMKAEKNKHTLHQPAVTFKP.

This sequence belongs to the major facilitator superfamily.

The protein resides in the cell membrane. This is an uncharacterized protein from Bacillus subtilis (strain 168).